The primary structure comprises 525 residues: Arabinose import ATP-binding protein AraG 2 (525 aa).

Residues 1–25 (MTDTTIRARGAQAAGSPAGAGPLDA) are disordered. Residues 7-25 (RARGAQAAGSPAGAGPLDA) are compositionally biased toward low complexity. ABC transporter domains are found at residues 35–270 (LELD…MVGR) and 281–524 (REPG…LALP). 67 to 74 (GENGAGKS) is an ATP binding site.

This sequence belongs to the ABC transporter superfamily. Arabinose importer (TC 3.A.1.2.2) family. In terms of assembly, the complex is composed of two ATP-binding proteins (AraG), two transmembrane proteins (AraH) and a solute-binding protein (AraF).

Its subcellular location is the cell inner membrane. The enzyme catalyses L-arabinose(out) + ATP + H2O = L-arabinose(in) + ADP + phosphate + H(+). Part of the ABC transporter complex AraFGH involved in arabinose import. Responsible for energy coupling to the transport system. The sequence is that of Arabinose import ATP-binding protein AraG 2 from Burkholderia thailandensis (strain ATCC 700388 / DSM 13276 / CCUG 48851 / CIP 106301 / E264).